The sequence spans 95 residues: Aspartyl/glutamyl-tRNA(Asn/Gln) amidotransferase subunit C (95 aa).

This sequence belongs to the GatC family. As to quaternary structure, heterotrimer of A, B and C subunits.

The catalysed reaction is L-glutamyl-tRNA(Gln) + L-glutamine + ATP + H2O = L-glutaminyl-tRNA(Gln) + L-glutamate + ADP + phosphate + H(+). The enzyme catalyses L-aspartyl-tRNA(Asn) + L-glutamine + ATP + H2O = L-asparaginyl-tRNA(Asn) + L-glutamate + ADP + phosphate + 2 H(+). Its function is as follows. Allows the formation of correctly charged Asn-tRNA(Asn) or Gln-tRNA(Gln) through the transamidation of misacylated Asp-tRNA(Asn) or Glu-tRNA(Gln) in organisms which lack either or both of asparaginyl-tRNA or glutaminyl-tRNA synthetases. The reaction takes place in the presence of glutamine and ATP through an activated phospho-Asp-tRNA(Asn) or phospho-Glu-tRNA(Gln). The protein is Aspartyl/glutamyl-tRNA(Asn/Gln) amidotransferase subunit C of Rhizobium rhizogenes (strain K84 / ATCC BAA-868) (Agrobacterium radiobacter).